The primary structure comprises 603 residues: Glutathione-regulated potassium-efflux system protein KefB (603 aa).

The next 13 membrane-spanning stretches (helical) occupy residues Ala5–Ala25, Ile29–Phe49, Val53–Leu73, Ile87–Tyr107, Ser115–Met135, Val152–Gly172, Trp180–Arg202, Phe207–Gly227, Leu230–Leu250, Gly268–Tyr288, Ile291–Phe311, Phe326–Ser346, and Pro356–Ile376. Residues Glu400–Ser521 form the RCK N-terminal domain.

It belongs to the monovalent cation:proton antiporter 2 (CPA2) transporter (TC 2.A.37) family. KefB subfamily. Interacts with the regulatory subunit KefG.

It is found in the cell inner membrane. In terms of biological role, pore-forming subunit of a potassium efflux system that confers protection against electrophiles. Catalyzes K(+)/H(+) antiport. The protein is Glutathione-regulated potassium-efflux system protein KefB of Pectobacterium atrosepticum (strain SCRI 1043 / ATCC BAA-672) (Erwinia carotovora subsp. atroseptica).